A 143-amino-acid polypeptide reads, in one-letter code: Nucleoside diphosphate kinase (143 aa).

The ATP site is built by K11, F59, R87, T93, R104, and N114. H117 serves as the catalytic Pros-phosphohistidine intermediate.

Belongs to the NDK family. Homotetramer. Requires Mg(2+) as cofactor.

The protein localises to the cytoplasm. The enzyme catalyses a 2'-deoxyribonucleoside 5'-diphosphate + ATP = a 2'-deoxyribonucleoside 5'-triphosphate + ADP. It catalyses the reaction a ribonucleoside 5'-diphosphate + ATP = a ribonucleoside 5'-triphosphate + ADP. Major role in the synthesis of nucleoside triphosphates other than ATP. The ATP gamma phosphate is transferred to the NDP beta phosphate via a ping-pong mechanism, using a phosphorylated active-site intermediate. This chain is Nucleoside diphosphate kinase, found in Edwardsiella ictaluri (strain 93-146).